Here is a 404-residue protein sequence, read N- to C-terminus: Cysteine desulfurase IscS (404 aa).

Pyridoxal 5'-phosphate-binding positions include 75-76, Asn-155, Gln-183, and 203-205; these read AT and TGH. Lys-206 carries the N6-(pyridoxal phosphate)lysine modification. Thr-243 serves as a coordination point for pyridoxal 5'-phosphate. Residue Cys-328 is the Cysteine persulfide intermediate of the active site. Position 328 (Cys-328) interacts with [2Fe-2S] cluster.

This sequence belongs to the class-V pyridoxal-phosphate-dependent aminotransferase family. NifS/IscS subfamily. Homodimer. Forms a heterotetramer with IscU, interacts with other sulfur acceptors. Pyridoxal 5'-phosphate is required as a cofactor.

Its subcellular location is the cytoplasm. The enzyme catalyses (sulfur carrier)-H + L-cysteine = (sulfur carrier)-SH + L-alanine. It participates in cofactor biosynthesis; iron-sulfur cluster biosynthesis. Master enzyme that delivers sulfur to a number of partners involved in Fe-S cluster assembly, tRNA modification or cofactor biosynthesis. Catalyzes the removal of elemental sulfur atoms from cysteine to produce alanine. Functions as a sulfur delivery protein for Fe-S cluster synthesis onto IscU, an Fe-S scaffold assembly protein, as well as other S acceptor proteins. The polypeptide is Cysteine desulfurase IscS (Cronobacter sakazakii (strain ATCC BAA-894) (Enterobacter sakazakii)).